Reading from the N-terminus, the 276-residue chain is Flagellin FljJ (276 aa).

The disordered stretch occupies residues 51-80; the sequence is RPGAGDMSGLAREDEPGSGDIDRGRGPRAG. The span at 61-75 shows a compositional bias: basic and acidic residues; sequence AREDEPGSGDIDRGR.

The protein belongs to the bacterial flagellin family. As to quaternary structure, in C.crescentus, the flagellar filament is composed of multiple flagellins of 29 kDa; 27 kDa and 25 kDa.

Its subcellular location is the secreted. The protein resides in the bacterial flagellum. Its function is as follows. Flagellin is the subunit protein which polymerizes to form the filaments of bacterial flagella. In Caulobacter vibrioides (strain ATCC 19089 / CIP 103742 / CB 15) (Caulobacter crescentus), this protein is Flagellin FljJ (fljJ).